The following is a 690-amino-acid chain: Glycine--tRNA ligase 1, mitochondrial (690 aa).

The N-terminal 24 residues, 1–24 (MSFFNISRRFYSQIVKKSVKIKRM), are a transit peptide targeting the mitochondrion. Residue Ser25 is modified to N-acetylserine. Residue Ser226 is modified to Phosphoserine. Glu251 provides a ligand contact to glycine. Residues 283-285 (RNE) and 294-295 (RV) contribute to the ATP site. Glu302 lines the glycine pocket. 410–411 (EC) is an ATP binding site. Residues Ser476 and Ser528 each carry the phosphoserine modification. Residue 531-533 (EPS) coordinates glycine. ATP is bound at residue Arg538. A Phosphothreonine modification is found at Thr689.

The protein belongs to the class-II aminoacyl-tRNA synthetase family. As to quaternary structure, homodimer.

The protein resides in the cytoplasm. Its subcellular location is the mitochondrion matrix. The catalysed reaction is tRNA(Gly) + glycine + ATP = glycyl-tRNA(Gly) + AMP + diphosphate. It catalyses the reaction 2 ATP + H(+) = P(1),P(4)-bis(5'-adenosyl) tetraphosphate + diphosphate. Its function is as follows. Catalyzes the ATP-dependent ligation of glycine to the 3'-end of its cognate tRNA, via the formation of an aminoacyl-adenylate intermediate (Gly-AMP). Also produces diadenosine tetraphosphate (Ap4A), a universal pleiotropic signaling molecule needed for cell regulation pathways, by direct condensation of 2 ATPs. Thereby, may play a special role in Ap4A homeostasis. This Saccharomyces cerevisiae (strain ATCC 204508 / S288c) (Baker's yeast) protein is Glycine--tRNA ligase 1, mitochondrial (GRS1).